The sequence spans 423 residues: ATP-citrate synthase alpha chain protein 2 (423 aa).

Citrate contacts are provided by Asn-343, Thr-345, and Arg-376.

Belongs to the succinate/malate CoA ligase beta subunit family. Heterooctamer of 4 alpha and 4 beta chains.

It is found in the cytoplasm. The protein resides in the cytosol. It catalyses the reaction oxaloacetate + acetyl-CoA + ADP + phosphate = citrate + ATP + CoA. ATP citrate-lyase is the primary enzyme responsible for the synthesis of cytosolic acetyl-CoA, used for the elongation of fatty acids and biosynthesis of isoprenoids, flavonoids and malonated derivatives. May supply substrate to the cytosolic acetyl-CoA carboxylase, which generates the malonyl-CoA used for the synthesis of a multitude of compounds, including very long chain fatty acids and flavonoids. Required for normal growth and development and elongation of C18 fatty acids to C20 to C24 fatty acids in seeds. In contrast to all known animal ACL enzymes having a homomeric structure, plant ACLs are composed of alpha and beta chains. The chain is ATP-citrate synthase alpha chain protein 2 (ACLA-2) from Arabidopsis thaliana (Mouse-ear cress).